The following is a 257-amino-acid chain: Zinc transporter ZupT (257 aa).

3 consecutive transmembrane segments (helical) span residues 5–25, 32–52, and 61–81; these read LILT…GVLG, LLAF…LMEM, and GMSP…YFGL. Positions 120 and 123 each coordinate Fe(2+). The Zn(2+) site is built by E123 and H148. 4 helical membrane-spanning segments follow: residues 137-157, 171-191, 195-215, and 236-256; these read LGFG…LAVA, ILWA…AWLI, MISP…MVAL, and GVLC…TAGI. Residues N149, E152, and E181 each coordinate Fe(2+). E152 lines the Zn(2+) pocket.

This sequence belongs to the ZIP transporter (TC 2.A.5) family. ZupT subfamily.

Its subcellular location is the cell inner membrane. It catalyses the reaction Zn(2+)(in) = Zn(2+)(out). Its function is as follows. Mediates zinc uptake. May also transport other divalent cations. This chain is Zinc transporter ZupT, found in Escherichia coli O7:K1 (strain IAI39 / ExPEC).